The following is a 77-amino-acid chain: Oxyopinin-4a (77 aa).

The signal sequence occupies residues 1 to 20 (MKISQVFIFVFLLMISVAWA). The propeptide occupies 21–47 (NEAYEEESNYLSERFDADVEEITPEFR). A disulfide bond links Cys51 and Cys57.

Expressed by the venom gland.

Its subcellular location is the secreted. The protein resides in the target cell membrane. Disrupts cell membranes through the formation of pores. Has antibacterial activity against Gram-positive bacteria S.aureus (MIC=10 uM) and B.subtilis (MIC=0.5 uM) as well as Gram-negative bacteria P.fluorescens (MIC=1 uM) and E.coli (MIC=0.5 uM). Has hemolytic activity against human erythrocytes (EC(50)=7 uM). The protein is Oxyopinin-4a of Oxyopes takobius (Lynx spider).